The chain runs to 107 residues: uncharacterized protein (107 aa).

Disordered stretches follow at residues 51–75 (VQRS…TQSA) and 88–107 (NPTP…APEP). A compositionally biased stretch (polar residues) spans 63–75 (NGNQGSAIPTQSA).

This is an uncharacterized protein from Fowl adenovirus A serotype 1 (strain CELO / Phelps) (FAdV-1).